The sequence spans 353 residues: Trans-enoyl reductase eqxC (353 aa).

45–48 is an NADP(+) binding site; that stretch reads VDTK. 131–138 contacts substrate; that stretch reads ISFMTTGL. NADP(+)-binding positions include 166-169, 189-192, Y207, and 254-255; these read SSAT, SPRN, and LE. 275–279 is a binding site for substrate; that stretch reads GPQML. 344 to 345 provides a ligand contact to NADP(+); that stretch reads IS.

It belongs to the zinc-containing alcohol dehydrogenase family. Monomer.

It carries out the reaction L-serine + 7 malonyl-CoA + acetyl-CoA + 2 S-adenosyl-L-methionine + ATP + 8 NADPH + 11 H(+) = (5S)-3-[(2E,6R,8E,10E,12E)-2,6-dimethyltetradeca-2,8,10,12-tetraenoyl]-5-(hydroxymethyl)pyrrolidine-2,4-dione + AMP + 2 S-adenosyl-L-homocysteine + 7 CO2 + diphosphate + 8 NADP(+) + 8 CoA + 6 H2O. Its pathway is mycotoxin biosynthesis. Functionally, trans-enoyl reductase; part of the gene cluster that mediates the biosynthesis of equisetin, a trans-fused decalin-containing tetramic acid with antimicrobial activity. The PKS module of eqxS together with the enoylreductase eqxC catalyze the formation of the polyketide unit which is then conjugated to L-serine by the condensation domain of the eqxS NRPS module. Activity of the Dieckmann cyclase domain (RED) results in release of the Dieckmann product intermediate. Diels-Alderase eqx3 is involved in endo-selective Diels-Alder cycloaddition to form the decalin ring, leading to the production of N-desmethylequisetin also called trichosetin. Subsequent N-methylation is carried out by eqxD to give equisetin. The polypeptide is Trans-enoyl reductase eqxC (Fusarium heterosporum).